A 468-amino-acid polypeptide reads, in one-letter code: Hydroxymethylglutaryl-CoA lyase, mitochondrial (468 aa).

A Pyruvate carboxyltransferase domain is found at 168-435; that stretch reads VKIVEVGPRD…HTNVDLGKLI (268 aa). Substrate is bound at residue arginine 176. 3 residues coordinate a divalent metal cation: aspartate 177, histidine 368, and histidine 370. Cysteine 401 is an active-site residue. A divalent metal cation is bound at residue asparagine 410.

The protein belongs to the HMG-CoA lyase family. Homodimer. The cofactor is a divalent metal cation.

The protein resides in the mitochondrion matrix. The catalysed reaction is (3S)-3-hydroxy-3-methylglutaryl-CoA = acetoacetate + acetyl-CoA. Its pathway is metabolic intermediate metabolism; (S)-3-hydroxy-3-methylglutaryl-CoA degradation; acetoacetate from (S)-3-hydroxy-3-methylglutaryl-CoA: step 1/1. In terms of biological role, involved in the catabolism of branched amino acids such as leucine. This Arabidopsis thaliana (Mouse-ear cress) protein is Hydroxymethylglutaryl-CoA lyase, mitochondrial (HMGCL).